The sequence spans 255 residues: Acetylglutamate kinase (255 aa).

Residues Gly-40 to Gly-41, Arg-62, and Asn-153 each bind substrate.

The protein belongs to the acetylglutamate kinase family. ArgB subfamily.

The protein resides in the cytoplasm. It carries out the reaction N-acetyl-L-glutamate + ATP = N-acetyl-L-glutamyl 5-phosphate + ADP. The protein operates within amino-acid biosynthesis; L-arginine biosynthesis; N(2)-acetyl-L-ornithine from L-glutamate: step 2/4. Catalyzes the ATP-dependent phosphorylation of N-acetyl-L-glutamate. The polypeptide is Acetylglutamate kinase (Bacillus cereus (strain B4264)).